The sequence spans 176 residues: Siroheme decarboxylase alpha subunit (176 aa).

The segment at 1–24 (MTEAHNACCHPSGTAAGHHGAGKA) is disordered. The span at 12–24 (SGTAAGHHGAGKA) shows a compositional bias: low complexity.

Belongs to the Ahb/Nir family. Forms a heterodimer composed of AhbA and AhbB. Also forms heterotetramers.

The catalysed reaction is siroheme + 2 H(+) = 12,18-didecarboxysiroheme + 2 CO2. Its pathway is porphyrin-containing compound metabolism; protoheme biosynthesis. In terms of biological role, involved in siroheme-dependent heme b biosynthesis. Catalyzes the decarboxylation of siroheme into didecarboxysiroheme. This chain is Siroheme decarboxylase alpha subunit, found in Nitratidesulfovibrio vulgaris (strain ATCC 29579 / DSM 644 / CCUG 34227 / NCIMB 8303 / VKM B-1760 / Hildenborough) (Desulfovibrio vulgaris).